Consider the following 749-residue polypeptide: Disintegrin and metalloproteinase domain-containing protein 10 (749 aa).

A signal peptide spans 1–18 (MGLLRLVFLLSWAASAGG). The propeptide occupies 19-213 (LYGNPLNKYI…SGPVILRKKR (195 aa)). Residues 19 to 673 (LYGNPLNKYI…NPELYENIAE (655 aa)) lie on the Extracellular side of the membrane. The short motif at 170–177 (GGCADSSV) is the Cysteine switch element. Cys-172 lines the Zn(2+) pocket. Residues 220 to 457 (NTCQLFIQTD…KENSCFVESG (238 aa)) form the Peptidase M12B domain. 17 disulfides stabilise this stretch: Cys-222–Cys-314, Cys-345–Cys-452, Cys-400–Cys-436, Cys-461–Cys-496, Cys-472–Cys-485, Cys-474–Cys-480, Cys-484–Cys-516, Cys-504–Cys-512, Cys-511–Cys-537, Cys-525–Cys-544, Cys-531–Cys-563, Cys-556–Cys-568, Cys-573–Cys-599, Cys-581–Cys-608, Cys-583–Cys-598, Cys-595–Cys-640, and Cys-633–Cys-646. Asn-268 and Asn-279 each carry an N-linked (GlcNAc...) asparagine glycan. Zn(2+) is bound at residue His-384. Glu-385 is a catalytic residue. Zn(2+) is bound by residues His-388 and His-394. Asn-440 carries N-linked (GlcNAc...) asparagine glycosylation. In terms of domain architecture, Disintegrin spans 458-552 (QPICGNGLVE…QCPPSEPREN (95 aa)). N-linked (GlcNAc...) asparagine glycosylation occurs at Asn-552. A helical transmembrane segment spans residues 674-694 (WIVAHWWAVLLMGIALIMLMA). At 695 to 749 (GFIKICSVHTPSSNPKLPPPKPLPGTLKRRRPPQTTQQPSRQRPRENYQMGHMRH) the chain is on the cytoplasmic side. The segment at 705–749 (PSSNPKLPPPKPLPGTLKRRRPPQTTQQPSRQRPRENYQMGHMRH) is disordered. The short motif at 709–716 (PKLPPPKP) is the SH3-binding element. Thr-720 is modified (phosphothreonine). The SH3-binding motif lies at 723-729 (RRRPPQT).

Zn(2+) is required as a cofactor. Post-translationally, the precursor is cleaved by furin and PCSK7.

Its subcellular location is the membrane. It catalyses the reaction Endopeptidase of broad specificity.. Functionally, controls the proteolytic processing of Notch and mediates lateral inhibition during neurogenesis. This is Disintegrin and metalloproteinase domain-containing protein 10 (adam10) from Xenopus laevis (African clawed frog).